The following is a 263-amino-acid chain: Endonuclease 8 (263 aa).

Catalysis depends on P2, which acts as the Schiff-base intermediate with DNA. Residue E3 is the Proton donor of the active site. K53 functions as the Proton donor; for beta-elimination activity in the catalytic mechanism. DNA is bound by residues Q70, R125, and N169. Residues 229–263 (KVFHREGKACERCGGVIERSTLSSRPFYGCPVCQK) form an FPG-type zinc finger. The active-site Proton donor; for delta-elimination activity is R253.

This sequence belongs to the FPG family. Zn(2+) is required as a cofactor.

It carries out the reaction 2'-deoxyribonucleotide-(2'-deoxyribose 5'-phosphate)-2'-deoxyribonucleotide-DNA = a 3'-end 2'-deoxyribonucleotide-(2,3-dehydro-2,3-deoxyribose 5'-phosphate)-DNA + a 5'-end 5'-phospho-2'-deoxyribonucleoside-DNA + H(+). Its function is as follows. Involved in base excision repair of DNA damaged by oxidation or by mutagenic agents. Acts as a DNA glycosylase that recognizes and removes damaged bases. Has a preference for oxidized pyrimidines, such as thymine glycol, 5,6-dihydrouracil and 5,6-dihydrothymine. Has AP (apurinic/apyrimidinic) lyase activity and introduces nicks in the DNA strand. Cleaves the DNA backbone by beta-delta elimination to generate a single-strand break at the site of the removed base with both 3'- and 5'-phosphates. The polypeptide is Endonuclease 8 (Enterobacter sp. (strain 638)).